The following is a 217-amino-acid chain: Protein-L-isoaspartate O-methyltransferase (217 aa).

Ser-62 is an active-site residue.

Belongs to the methyltransferase superfamily. L-isoaspartyl/D-aspartyl protein methyltransferase family.

Its subcellular location is the cytoplasm. It catalyses the reaction [protein]-L-isoaspartate + S-adenosyl-L-methionine = [protein]-L-isoaspartate alpha-methyl ester + S-adenosyl-L-homocysteine. Its function is as follows. Catalyzes the methyl esterification of L-isoaspartyl residues in peptides and proteins that result from spontaneous decomposition of normal L-aspartyl and L-asparaginyl residues. It plays a role in the repair and/or degradation of damaged proteins. This Trichlorobacter lovleyi (strain ATCC BAA-1151 / DSM 17278 / SZ) (Geobacter lovleyi) protein is Protein-L-isoaspartate O-methyltransferase.